The following is a 491-amino-acid chain: Probable glycine dehydrogenase (decarboxylating) subunit 2 (491 aa).

At K264 the chain carries N6-(pyridoxal phosphate)lysine.

This sequence belongs to the GcvP family. C-terminal subunit subfamily. In terms of assembly, the glycine cleavage system is composed of four proteins: P, T, L and H. In this organism, the P 'protein' is a heterodimer of two subunits. The cofactor is pyridoxal 5'-phosphate.

It carries out the reaction N(6)-[(R)-lipoyl]-L-lysyl-[glycine-cleavage complex H protein] + glycine + H(+) = N(6)-[(R)-S(8)-aminomethyldihydrolipoyl]-L-lysyl-[glycine-cleavage complex H protein] + CO2. Functionally, the glycine cleavage system catalyzes the degradation of glycine. The P protein binds the alpha-amino group of glycine through its pyridoxal phosphate cofactor; CO(2) is released and the remaining methylamine moiety is then transferred to the lipoamide cofactor of the H protein. This Coxiella burnetii (strain CbuK_Q154) (Coxiella burnetii (strain Q154)) protein is Probable glycine dehydrogenase (decarboxylating) subunit 2.